Reading from the N-terminus, the 526-residue chain is Reticulocyte-binding protein homolog 5 (526 aa).

The N-terminal stretch at 1–24 (MIRIKKKLILTIIYIHLFILNRLS) is a signal peptide. The mediates interaction with human BSG stretch occupies residues 33 to 51 (KNQENNLTLLPIKSTEEEK). 2 N-linked (GlcNAc...) asparagine glycosylation sites follow: N38 and N214. 2 disulfide bridges follow: C224-C317 and C345-C351. Acidic residues predominate over residues 259–279 (EIDDKSEETDDETEEVEDSIQ). Positions 259–294 (EIDDKSEETDDETEEVEDSIQDTDSNHTPSNKKKND) are disordered. The N-linked (GlcNAc...) asparagine glycan is linked to N297.

As to quaternary structure, forms a complex composed of RH5, P113 and human BSG/basigin; the complex bridges the merozoite and host erythrocyte membranes. Within the complex, interacts (via C-terminus) with human BSG/basigin isoform 2 (via the extracellular domain); the interaction is independent of BSG glycosylation status. Weakly interacts with P.troglodytes BSG but not with G.gorilla BSG. Also, interacts (via N-terminus) with P113; the interaction tethers RH5 to the merozoite membrane. Component of the PfRH5 adhesion complex composed of 1 copy of CyRPA, RH5 and RIPR; the complex is formed during merozoite invasion of host erythrocytes specifically at the interface between the parasite and host membranes. Within the complex, interacts with CyRPA. CyRPA recruits RIPR to the RH5-P113-BSG complex; the formation of the PfRH5 adhesion complex increases the affinity of RH5 for BSG and probably leads to the release of RH5 from P113 while maintaining the interaction of the PfRH5 adhesion complex with BSG. Cleaved into a 45kDa form during merozoite invasion of host erythrocyte.

It is found in the secreted. The protein localises to the cytoplasmic vesicle. The protein resides in the secretory vesicle. Its subcellular location is the rhoptry lumen. It localises to the host cell membrane. Its function is as follows. Essential for the invasion of host erythrocytes by blood stage merozoites. By binding P113 at the surface of the merozoite and human BSG/basigin on the erythrocyte membrane, leads to the establishment of a tight junction between the merozoite and host erythrocyte membranes. In addition, the interaction with BSG results in BSG dimerization which triggers an increase in intracellular Ca(2+) in the erythrocyte. This essential step leads to a rearrangement of the erythrocyte cytoskeleton required for the merozoite invasion. The polypeptide is Reticulocyte-binding protein homolog 5 (Plasmodium falciparum (isolate 3D7)).